Here is a 247-residue protein sequence, read N- to C-terminus: UPF0246 protein LSEI_2080 (247 aa).

Belongs to the UPF0246 family.

This is UPF0246 protein LSEI_2080 from Lacticaseibacillus paracasei (strain ATCC 334 / BCRC 17002 / CCUG 31169 / CIP 107868 / KCTC 3260 / NRRL B-441) (Lactobacillus paracasei).